Reading from the N-terminus, the 1165-residue chain is MVHAPARSEDIREEVAELLGVDVDAVQPGSNLIGQGLDSIRIMTLAGRWRRRGIAVDFATLAETPTIEAWAQLVTAGRQDTDSAAPPADSSGDPSGETEPFALAPMQHAMWVGRQDNQQLGGVAGHLYVEFDAGLLDSGRLRAAATALARRHPMLRVRFLPDGTQCITPAVECGDFPVHVEDLRELGTDEVERRLTALREAKSHQQLDGAVFELTVTLLPGGRSRLHVDLDMQAADAMSYRTLMADLAALYRGCDLPELSYTYRQYRHAVEAQDAQPQPRRDADRDWWARRLPELPDPPALPITAGRGANRSTRRWHWLDPQTRDALFARAQARGITPAMALAAGFANTLARWSSNSRFLLNVPLFGRQPLHPDVDALVGDFTSSLLLDVDLVGAHTAAARAQVVQDAMRTAAAHSAYSGLSVLRDLSRHRGTQVLAPVVFTSALGLGELFSPEVTGQFGTPAWIISQGPQVLLDAQVTEFDGGVLVNWDVREGFFPPGVIDAMFAYHIDELLRLASADDAWDAPGPAALPEAQRAVREAINGRTAPPSGEALHDRFFRQAERQPDAPAVFAGSGDLSYAQLRDQALAVAAALRAAGAGAGDTVAVVGPKSAEQIPAVLGILSVGAAYLPIGADQPRDRAERILQSGRVRLALVCGGRQLSLPVPGLVLADVLGGAPADAEIACARVDPGELAYVLFTSGSTGEPKGVEVTHDAAMNTVEFIGRHFEIGPADRCLALSTLEGDISVMDVFVTLRTGGAIVVVDEAQRRDPDAWARLIDTHRVTVLHFMPGWLEMLVEVGRGRLSSVRVVPTGGDWVRPEVVRRLRAEAPGLRFAGLGGATETPVHNTIFEVTEPIPADWTALPFGVPLPNNVCRVVGDTGGDCPEWVPGELWVSGRGIARGYRGRPDLTAQRFVEHDGRTSYRTGDLVRYRPDGTLEFVGRADHRVKISGYRVELGEIESALRRVPGVRTAVAALIAGAGESDVLAAQVGTDDPALTGEQVRQYLADLVPAHMIPRHVAVVERIGFTAAGKLDRRAVARELHSVVGQSHSPGHRAASTPLEGALALILGDLLGRDDVGVDDDFFALGGDSVLATQAVARIRAWLDAPDVMVADMFANRTVSALAAVLRAAEDDPDRLDHVAELYLEVIGMDAESVLTATRQTTKS.

The Carrier 1 domain maps to 5–78 (PARSEDIREE…AWAQLVTAGR (74 aa)). Ser-39 is subject to O-(pantetheine 4'-phosphoryl)serine. The interval 77–100 (GRQDTDSAAPPADSSGDPSGETEP) is disordered. Residues 97 to 393 (ETEPFALAPM…SSLLLDVDLV (297 aa)) form a condensation/cyclization region. The segment at 578–973 (SYAQLRDQAL…RVPGVRTAVA (396 aa)) is adenylation. Residues 1055 to 1131 (AASTPLEGAL…ALAAVLRAAE (77 aa)) enclose the Carrier 2 domain. Ser-1090 carries the O-(pantetheine 4'-phosphoryl)serine modification.

It belongs to the ATP-dependent AMP-binding enzyme family. MbtB subfamily. Pantetheine 4'-phosphate serves as cofactor. In terms of processing, 4'-phosphopantetheine is transferred from CoA to a specific serine in each of the two carrier protein domains, leading to their activation from apo to holo forms.

It functions in the pathway siderophore biosynthesis; mycobactin biosynthesis. Involved in the initial steps of the mycobactin biosynthetic pathway. Putatively couples activated salicylic acid with serine or threonine and cyclizes this precursor to the hydroxyphenyloxazoline ring system present in this class of siderophores. This is Phenyloxazoline synthase MbtB (mbtB) from Mycolicibacterium paratuberculosis (strain ATCC BAA-968 / K-10) (Mycobacterium paratuberculosis).